The primary structure comprises 79 residues: UPF0154 protein lwe1321 (79 aa).

The helical transmembrane segment at 2-22 threads the bilayer; sequence WIYILVGIICLLAGLAGGFFI. Residues 57–66 show a composition bias toward polar residues; the sequence is KINQMMSAMN. A disordered region spans residues 57–79; sequence KINQMMSAMNKQQEKEKPKKAKK.

The protein belongs to the UPF0154 family.

It is found in the cell membrane. In Listeria welshimeri serovar 6b (strain ATCC 35897 / DSM 20650 / CCUG 15529 / CIP 8149 / NCTC 11857 / SLCC 5334 / V8), this protein is UPF0154 protein lwe1321.